Reading from the N-terminus, the 498-residue chain is Guanosine-5'-triphosphate,3'-diphosphate pyrophosphatase (498 aa).

This sequence belongs to the GppA/Ppx family. GppA subfamily.

It catalyses the reaction guanosine 3'-diphosphate 5'-triphosphate + H2O = guanosine 3',5'-bis(diphosphate) + phosphate + H(+). The protein operates within purine metabolism; ppGpp biosynthesis; ppGpp from GTP: step 2/2. Functionally, catalyzes the conversion of pppGpp to ppGpp. Guanosine pentaphosphate (pppGpp) is a cytoplasmic signaling molecule which together with ppGpp controls the 'stringent response', an adaptive process that allows bacteria to respond to amino acid starvation, resulting in the coordinated regulation of numerous cellular activities. The sequence is that of Guanosine-5'-triphosphate,3'-diphosphate pyrophosphatase from Yersinia pseudotuberculosis serotype O:1b (strain IP 31758).